A 530-amino-acid polypeptide reads, in one-letter code: Proline--tRNA ligase, cytoplasmic (530 aa).

It belongs to the class-II aminoacyl-tRNA synthetase family.

The protein resides in the cytoplasm. It is found in the cytosol. The catalysed reaction is tRNA(Pro) + L-proline + ATP = L-prolyl-tRNA(Pro) + AMP + diphosphate. Catalyzes the attachment of proline to tRNA(Pro) in a two-step reaction: proline is first activated by ATP to form Pro-AMP and then transferred to the acceptor end of tRNA(Pro). This chain is Proline--tRNA ligase, cytoplasmic, found in Arabidopsis thaliana (Mouse-ear cress).